The following is an 84-amino-acid chain: MDLSNLLDFPSILPEDIQVIAPTSYAKLSLLSHCQHLKLFIGQQGSKGVCAHSRVLEEKLEAVKEVISKIIETDKILEKSEKFL.

The protein belongs to the herpesviridae TRM2 protein family. In terms of assembly, associates with TRM1 and TRM3 to form the tripartite terminase complex.

Its subcellular location is the host nucleus. Functionally, component of the molecular motor that translocates viral genomic DNA in empty capsid during DNA packaging. Forms a tripartite terminase complex together with TRM1 and TRM3 in the host cytoplasm. Once the complex reaches the host nucleus, it interacts with the capsid portal vertex. This portal forms a ring in which genomic DNA is translocated into the capsid. The chain is Tripartite terminase subunit 2 from Alcelaphine herpesvirus 1 (strain C500) (AlHV-1).